The chain runs to 258 residues: UPF0246 protein YaaA (258 aa).

The protein belongs to the UPF0246 family.

This Shigella dysenteriae serotype 1 (strain Sd197) protein is UPF0246 protein YaaA.